Reading from the N-terminus, the 920-residue chain is MASATVAAAGRALRRAVPLLRRSYQTERGVYGYRPRKAGSGEPRGDRARPSVDHGLARLVTVYCEHGHKAAQINPLFPGQALLDTVPEIQALVQTLQGPFTTTGLLNMGKEEASLEEVLAYLNHIYCGPISIETAQLQSQEEKDWFARRFEELKKETFTTEERKHLSKLLLESQEFDHFLATKFATVKRYGGEGAESMMGFFHELLKLSAYGGITDIIIGMPHRGRLNLLTGLLQLPPELMFRKMRGLSEFPENVAAIGDVLSHLTSSVDLDFGAHRPLHVTMLPNPSHLEAINPVAVGKTRGRQQSQEDGDYSPNGSAQPGDKVICLQVHGDASFCGQGIVLETFTLSNLPHFRIGGSIHLIVNNQLGYTTPAERGRSSLYSSDIGKLVGCAIIHVNGDSPEEVVRATRLAFEYQRQFRKDVIIDLLCYRQWGHNELDEPFFTNPVMYKIIRARKSIPDTYAEHLIASGLMTQEEVSDIKASYYAKLNGHLANVAHYSPPAPHLQARWQGLVQPAACVTTWDTGVPLELLRFVGVKSVEVPEELQLHSHLLKMYVQSRMEKVKNGTNLDWATAETLALGSLLAQGFNVRLSGQDVGRGTFSQRHAMVVCQNTDDVYIPLNHMDPNQKGFLEVSNSPLSEEAVLGFEYGMSIESPKLLPLWEAQFGDFFNGAQIIFDTFISGGEAKWLLQSGLVILLPHGYDGAGPDHSSCRIERFLQMCDSAEEGVDSDTVNMFVVHPTTPAQYFHLLRRQMMRNFRKPLIVASPKMLLRYPVAVSTLEEMAPGTAFKPVIGDSSVDPKNVKTLIFCSGKHFYALLKQRESLGAKKRDFAIIRLEELCPFPLDSLQQEMGKYKHVQDIIWSQEEPQNMGPWSFVYPRFEKQLACKLRLVSRPPLPAPAVGIGTVHQQQHEAILFKTFTS.

Lysine 183 and lysine 188 each carry N6-succinyllysine. Residues 299 to 318 form a disordered region; that stretch reads GKTRGRQQSQEDGDYSPNGS. N6-succinyllysine occurs at positions 800 and 818.

It belongs to the alpha-ketoglutarate dehydrogenase family. As to quaternary structure, the 2-oxoadipate dehydrogenase complex is composed of OADH (2-oxoadipate dehydrogenase; E1a), DLST (dihydrolipoamide succinyltransferase; E2) and DLD (dihydrolipoamide dehydrogenase; E3). E1a functional unit is a dimer. Thiamine diphosphate is required as a cofactor.

The protein resides in the mitochondrion. The enzyme catalyses N(6)-[(R)-lipoyl]-L-lysyl-[protein] + 2-oxoadipate + H(+) = N(6)-[(R)-S(8)-glutaryldihydrolipoyl]-L-lysyl-[protein] + CO2. It functions in the pathway amino-acid degradation. In terms of biological role, 2-oxoadipate dehydrogenase (E1a) component of the 2-oxoadipate dehydrogenase complex (OADHC). Participates in the first step, rate limiting for the overall conversion of 2-oxoadipate (alpha-ketoadipate) to glutaryl-CoA and CO(2) catalyzed by the whole OADHC. Catalyzes the irreversible decarboxylation of 2-oxoadipate via the thiamine diphosphate (ThDP) cofactor and subsequent transfer of the decarboxylated acyl intermediate on an oxidized dihydrolipoyl group that is covalently amidated to the E2 enzyme (dihydrolipoyllysine-residue succinyltransferase or DLST). Can catalyze the decarboxylation of 2-oxoglutarate in vitro, but at a much lower rate than 2-oxoadipate. Responsible for the last step of L-lysine, L-hydroxylysine and L-tryptophan catabolism with the common product being 2-oxoadipate. The polypeptide is 2-oxoadipate dehydrogenase complex component E1 (Dhtkd1) (Rattus norvegicus (Rat)).